We begin with the raw amino-acid sequence, 319 residues long: Acetyl esterase (319 aa).

The short motif at 91 to 93 (HGG) is the Involved in the stabilization of the negatively charged intermediate by the formation of the oxyanion hole element. Active-site residues include Ser165, Asp262, and His292.

It belongs to the 'GDXG' lipolytic enzyme family. Homodimer. Interacts with MalT and MelA.

The protein resides in the cytoplasm. Displays esterase activity towards short chain fatty esters (acyl chain length of up to 8 carbons). Able to hydrolyze triacetylglycerol (triacetin) and tributyrylglycerol (tributyrin), but not trioleylglycerol (triolein) or cholesterol oleate. Negatively regulates MalT activity by antagonizing maltotriose binding. Inhibits MelA galactosidase activity. The sequence is that of Acetyl esterase from Shigella boydii serotype 4 (strain Sb227).